A 263-amino-acid polypeptide reads, in one-letter code: Tropinone reductase homolog At2g29300 (263 aa).

NADP(+) is bound at residue 13–37 (LVTGAASGIGYAIVEELAGFGARIH). Substrate is bound at residue Ser146. Tyr160 functions as the Proton acceptor in the catalytic mechanism.

It belongs to the short-chain dehydrogenases/reductases (SDR) family. SDR65C subfamily.

The polypeptide is Tropinone reductase homolog At2g29300 (Arabidopsis thaliana (Mouse-ear cress)).